The sequence spans 267 residues: Indole-3-glycerol phosphate synthase (267 aa).

The protein belongs to the TrpC family.

The catalysed reaction is 1-(2-carboxyphenylamino)-1-deoxy-D-ribulose 5-phosphate + H(+) = (1S,2R)-1-C-(indol-3-yl)glycerol 3-phosphate + CO2 + H2O. Its pathway is amino-acid biosynthesis; L-tryptophan biosynthesis; L-tryptophan from chorismate: step 4/5. This Verminephrobacter eiseniae (strain EF01-2) protein is Indole-3-glycerol phosphate synthase.